A 275-amino-acid chain; its full sequence is Bis(5'-nucleosyl)-tetraphosphatase, symmetrical (275 aa).

It belongs to the Ap4A hydrolase family.

It carries out the reaction P(1),P(4)-bis(5'-adenosyl) tetraphosphate + H2O = 2 ADP + 2 H(+). Its function is as follows. Hydrolyzes diadenosine 5',5'''-P1,P4-tetraphosphate to yield ADP. The chain is Bis(5'-nucleosyl)-tetraphosphatase, symmetrical from Marinomonas sp. (strain MWYL1).